The sequence spans 322 residues: MTNQTVPPLFPHRHLLGIKGLSPLDILCLLDLADQEIAVSRQPEKKKSVLRGRTQINLFFEASTRTQSSFELAGKRLGADVMNMSVGNSSVKKGETLIDTAMTLNAMQPDILVIRHASAGAAALLAQKVGCSVVNAGDGAHEHPTQALLDALTIRRAKGGIENLIVAICGDVLHSRVARSNILLLNALGARVRVVAPSTLLPSGMADMSVEVFNSMEEGLKDADVVMMLRLQRERMAGSFVPSVREYFRFYGLDKEKLKVAKPDALVMHPGPMNRGVEIASDVADGPQSVIQQQVEMGVAVRMAVMEALLDPRRNPSNGEAA.

Carbamoyl phosphate-binding residues include Arg-65 and Thr-66. L-aspartate is bound at residue Lys-93. Positions 115, 143, and 146 each coordinate carbamoyl phosphate. L-aspartate contacts are provided by Arg-176 and Arg-230. Residues Gly-271 and Pro-272 each coordinate carbamoyl phosphate.

Belongs to the aspartate/ornithine carbamoyltransferase superfamily. ATCase family. In terms of assembly, heterododecamer (2C3:3R2) of six catalytic PyrB chains organized as two trimers (C3), and six regulatory PyrI chains organized as three dimers (R2).

It catalyses the reaction carbamoyl phosphate + L-aspartate = N-carbamoyl-L-aspartate + phosphate + H(+). It functions in the pathway pyrimidine metabolism; UMP biosynthesis via de novo pathway; (S)-dihydroorotate from bicarbonate: step 2/3. In terms of biological role, catalyzes the condensation of carbamoyl phosphate and aspartate to form carbamoyl aspartate and inorganic phosphate, the committed step in the de novo pyrimidine nucleotide biosynthesis pathway. This is Aspartate carbamoyltransferase catalytic subunit from Brucella anthropi (strain ATCC 49188 / DSM 6882 / CCUG 24695 / JCM 21032 / LMG 3331 / NBRC 15819 / NCTC 12168 / Alc 37) (Ochrobactrum anthropi).